The chain runs to 144 residues: UPF0102 protein BPSL3274 (144 aa).

The segment at 1-28 (MCHAREASPGTGEPEAAPRDNFPREAGS) is disordered. Positions 16–28 (AAPRDNFPREAGS) are enriched in basic and acidic residues.

Belongs to the UPF0102 family.

The protein is UPF0102 protein BPSL3274 of Burkholderia pseudomallei (strain K96243).